Consider the following 341-residue polypeptide: Paired box protein Pax-9 (341 aa).

Positions Ala-4–Lys-130 form a DNA-binding region, paired. The tract at residues Glu-7 to Thr-63 is PAI subdomain. The RED subdomain stretch occupies residues Thr-82–Lys-130. An interaction with KDM5B region spans residues Ala-168–Pro-189.

Interacts with KDM5B.

The protein localises to the nucleus. Its function is as follows. Transcription factor required for normal development of thymus, parathyroid glands, ultimobranchial bodies, teeth, skeletal elements of skull and larynx as well as distal limbs. In Leontopithecus rosalia (Golden lion tamarin), this protein is Paired box protein Pax-9 (PAX9).